Here is a 227-residue protein sequence, read N- to C-terminus: Ribonuclease 3 (227 aa).

Residues 6–128 enclose the RNase III domain; that stretch reads ASDYQQRIGY…VIAAIYLDAD (123 aa). Residue E41 participates in Mg(2+) binding. D45 is an active-site residue. Residues D114 and E117 each contribute to the Mg(2+) site. E117 is an active-site residue. The DRBM domain occupies 155–225; sequence DPKTRLQEWL…ASHAIDQLDS (71 aa). A compositionally biased stretch (basic and acidic residues) spans 203–212; it reads GEGSSRRLAE. The segment at 203–227 is disordered; that stretch reads GEGSSRRLAEQDAASHAIDQLDSNK.

The protein belongs to the ribonuclease III family. As to quaternary structure, homodimer. It depends on Mg(2+) as a cofactor.

The protein resides in the cytoplasm. The catalysed reaction is Endonucleolytic cleavage to 5'-phosphomonoester.. Its function is as follows. Digests double-stranded RNA. Involved in the processing of primary rRNA transcript to yield the immediate precursors to the large and small rRNAs (23S and 16S). Processes some mRNAs, and tRNAs when they are encoded in the rRNA operon. Processes pre-crRNA and tracrRNA of type II CRISPR loci if present in the organism. This chain is Ribonuclease 3, found in Xylella fastidiosa (strain M23).